Consider the following 178-residue polypeptide: Protein GrpE (178 aa).

The segment at 1–26 (MQDQDKYAEQAASMEEPASADAPAIV) is disordered.

Belongs to the GrpE family. As to quaternary structure, homodimer.

Its subcellular location is the cytoplasm. Functionally, participates actively in the response to hyperosmotic and heat shock by preventing the aggregation of stress-denatured proteins, in association with DnaK and GrpE. It is the nucleotide exchange factor for DnaK and may function as a thermosensor. Unfolded proteins bind initially to DnaJ; upon interaction with the DnaJ-bound protein, DnaK hydrolyzes its bound ATP, resulting in the formation of a stable complex. GrpE releases ADP from DnaK; ATP binding to DnaK triggers the release of the substrate protein, thus completing the reaction cycle. Several rounds of ATP-dependent interactions between DnaJ, DnaK and GrpE are required for fully efficient folding. In Herminiimonas arsenicoxydans, this protein is Protein GrpE.